The chain runs to 294 residues: Acetylglutamate kinase (294 aa).

Substrate-binding positions include 63–64 (GG), Arg-85, and Asn-188.

Belongs to the acetylglutamate kinase family. ArgB subfamily.

It localises to the cytoplasm. The catalysed reaction is N-acetyl-L-glutamate + ATP = N-acetyl-L-glutamyl 5-phosphate + ADP. It participates in amino-acid biosynthesis; L-arginine biosynthesis; N(2)-acetyl-L-ornithine from L-glutamate: step 2/4. Its function is as follows. Catalyzes the ATP-dependent phosphorylation of N-acetyl-L-glutamate. This is Acetylglutamate kinase from Methanococcus maripaludis (strain C6 / ATCC BAA-1332).